Reading from the N-terminus, the 549-residue chain is Glucose-6-phosphate isomerase (549 aa).

The active-site Proton donor is the Glu-355. Active-site residues include His-387 and Lys-515.

It belongs to the GPI family.

It is found in the cytoplasm. It catalyses the reaction alpha-D-glucose 6-phosphate = beta-D-fructose 6-phosphate. The protein operates within carbohydrate biosynthesis; gluconeogenesis. It functions in the pathway carbohydrate degradation; glycolysis; D-glyceraldehyde 3-phosphate and glycerone phosphate from D-glucose: step 2/4. Functionally, catalyzes the reversible isomerization of glucose-6-phosphate to fructose-6-phosphate. This chain is Glucose-6-phosphate isomerase, found in Haemophilus influenzae (strain PittEE).